The sequence spans 243 residues: Transcription factor A, mitochondrial (243 aa).

A mitochondrion-targeting transit peptide spans Met-1–Phe-42. The segment at residues Pro-49–Lys-117 is a DNA-binding region (HMG box 1). Phosphoserine; by PKA occurs at positions 54, 55, and 60. Lys-66 carries the N6-succinyllysine modification. Thr-121 bears the Phosphothreonine mark. Residues Pro-154–Glu-218 constitute a DNA-binding region (HMG box 2). Ser-159 bears the Phosphoserine; by PKA mark. Ser-192 is subject to Phosphoserine.

As to quaternary structure, monomer; binds DNA as a monomer. Homodimer. Component of the mitochondrial transcription initiation complex, composed at least of TFB2M, TFAM and POLRMT. In this complex TFAM recruits POLRMT to the promoter whereas TFB2M induces structural changes in POLRMT to enable promoter opening and trapping of the DNA non-template strand. Upon metabolic stress, forms a complex composed of FOXO3, SIRT3, TFAM and POLRMT. Interacts with TFB1M and TFB2M. Interacts with CLPX; this enhances DNA-binding. Phosphorylation by PKA within the HMG box 1 impairs DNA binding and promotes degradation by the AAA+ Lon protease. As to expression, the mitochondrial isoform is widely expressed while the nuclear isoform is testis-specific.

The protein localises to the mitochondrion. The protein resides in the mitochondrion matrix. Its subcellular location is the mitochondrion nucleoid. It is found in the nucleus. Functionally, binds to the mitochondrial light strand promoter and functions in mitochondrial transcription regulation. Component of the mitochondrial transcription initiation complex, composed at least of TFB2M, TFAM and POLRMT that is required for basal transcription of mitochondrial DNA. In this complex, TFAM recruits POLRMT to a specific promoter whereas TFB2M induces structural changes in POLRMT to enable promoter opening and trapping of the DNA non-template strand. Required for accurate and efficient promoter recognition by the mitochondrial RNA polymerase. Promotes transcription initiation from the HSP1 and the light strand promoter by binding immediately upstream of transcriptional start sites. Is able to unwind DNA. Bends the mitochondrial light strand promoter DNA into a U-turn shape via its HMG boxes. Required for maintenance of normal levels of mitochondrial DNA. May play a role in organizing and compacting mitochondrial DNA. May also function as a transcriptional activator or may have a structural role in the compaction of nuclear DNA during spermatogenesis. The protein is Transcription factor A, mitochondrial of Mus musculus (Mouse).